The following is a 497-amino-acid chain: B3 domain-containing protein REM1 (497 aa).

3 DNA-binding regions (TF-B3) span residues 7–92 (PSLF…SSES), 142–239 (FLRA…LCSH), and 278–379 (FLTQ…HSKI). Positions 87 to 135 (AVSSESDDDESDDTDDSESDDESNDTDDSESDDSEDNGEGDSSLVNKEA) are disordered. The segment covering 91–125 (ESDDDESDDTDDSESDDESNDTDDSESDDSEDNGE) has biased composition (acidic residues).

In terms of tissue distribution, specifically expressed in the reproductive meristem.

It localises to the nucleus. Functionally, may play a role in flower development. The polypeptide is B3 domain-containing protein REM1 (REM1) (Brassica oleracea var. botrytis (Cauliflower)).